We begin with the raw amino-acid sequence, 541 residues long: Zinc finger protein 503 (541 aa).

Over residues 1–18 (MSNSPLGSGSRISHFTTE) the composition is skewed to polar residues. 2 disordered regions span residues 1 to 49 (MSNS…QAGR) and 97 to 255 (TCSQ…SSSV). Positions 137–157 (AEDKSSFKPYSKHPDKKDQSA) are enriched in basic and acidic residues. The span at 236–255 (SLSAAPSPTPASSSSSSSSV) shows a compositional bias: low complexity. The segment at 411–439 (HVCNWVSATGPCDKRFSSSEELLGHLRTH) adopts a C2H2-type zinc-finger fold. The tract at residues 474-511 (GASPGPLTLRSPHHHPLGLSSSRYHPYSKSPLPSGGAP) is disordered.

The protein belongs to the Elbow/Noc family.

It localises to the nucleus. May function as a transcriptional repressor. This chain is Zinc finger protein 503 (znf503), found in Xenopus tropicalis (Western clawed frog).